Reading from the N-terminus, the 293-residue chain is Bifunctional protein FolD (293 aa).

NADP(+) contacts are provided by residues 165-167 (GRS), Ser-190, and Ile-231.

It belongs to the tetrahydrofolate dehydrogenase/cyclohydrolase family. In terms of assembly, homodimer.

The catalysed reaction is (6R)-5,10-methylene-5,6,7,8-tetrahydrofolate + NADP(+) = (6R)-5,10-methenyltetrahydrofolate + NADPH. It catalyses the reaction (6R)-5,10-methenyltetrahydrofolate + H2O = (6R)-10-formyltetrahydrofolate + H(+). The protein operates within one-carbon metabolism; tetrahydrofolate interconversion. In terms of biological role, catalyzes the oxidation of 5,10-methylenetetrahydrofolate to 5,10-methenyltetrahydrofolate and then the hydrolysis of 5,10-methenyltetrahydrofolate to 10-formyltetrahydrofolate. This is Bifunctional protein FolD from Synechococcus sp. (strain CC9311).